The following is a 345-amino-acid chain: Biotin synthase (345 aa).

Positions 38–256 (RQVQVSTLLS…IAVARIMMPA (219 aa)) constitute a Radical SAM core domain. [4Fe-4S] cluster-binding residues include Cys-53, Cys-57, and Cys-60. 4 residues coordinate [2Fe-2S] cluster: Cys-97, Cys-128, Cys-188, and Arg-260.

Belongs to the radical SAM superfamily. Biotin synthase family. As to quaternary structure, homodimer. Requires [4Fe-4S] cluster as cofactor. [2Fe-2S] cluster serves as cofactor.

The enzyme catalyses (4R,5S)-dethiobiotin + (sulfur carrier)-SH + 2 reduced [2Fe-2S]-[ferredoxin] + 2 S-adenosyl-L-methionine = (sulfur carrier)-H + biotin + 2 5'-deoxyadenosine + 2 L-methionine + 2 oxidized [2Fe-2S]-[ferredoxin]. It functions in the pathway cofactor biosynthesis; biotin biosynthesis; biotin from 7,8-diaminononanoate: step 2/2. Catalyzes the conversion of dethiobiotin (DTB) to biotin by the insertion of a sulfur atom into dethiobiotin via a radical-based mechanism. The sequence is that of Biotin synthase from Serratia proteamaculans (strain 568).